Consider the following 110-residue polypeptide: Phosphoribosyl-ATP pyrophosphatase (110 aa).

Belongs to the PRA-PH family.

Its subcellular location is the cytoplasm. The enzyme catalyses 1-(5-phospho-beta-D-ribosyl)-ATP + H2O = 1-(5-phospho-beta-D-ribosyl)-5'-AMP + diphosphate + H(+). Its pathway is amino-acid biosynthesis; L-histidine biosynthesis; L-histidine from 5-phospho-alpha-D-ribose 1-diphosphate: step 2/9. The chain is Phosphoribosyl-ATP pyrophosphatase from Pseudomonas syringae pv. syringae (strain B728a).